Reading from the N-terminus, the 38-residue chain is QQVPGZKETKIKVPIAMFGGSGNYAXALYIAAVKXNAV.

This sequence belongs to the ATPase delta chain family. F-type ATPases have 2 components, CF(1) - the catalytic core - and CF(0) - the membrane proton channel. CF(1) has five subunits: alpha(3), beta(3), gamma(1), delta(1), epsilon(1). CF(0) has three main subunits: a, b and c.

The protein localises to the mitochondrion. It localises to the mitochondrion inner membrane. Functionally, mitochondrial membrane ATP synthase (F(1)F(0) ATP synthase or Complex V) produces ATP from ADP in the presence of a proton gradient across the membrane which is generated by electron transport complexes of the respiratory chain. F-type ATPases consist of two structural domains, F(1) - containing the extramembraneous catalytic core and F(0) - containing the membrane proton channel, linked together by a central stalk and a peripheral stalk. During catalysis, ATP synthesis in the catalytic domain of F(1) is coupled via a rotary mechanism of the central stalk subunits to proton translocation. Part of the complex F(0) domain and the peripheric stalk, which acts as a stator to hold the catalytic alpha(3)beta(3) subcomplex and subunit a/ATP6 static relative to the rotary elements. The chain is ATP synthase subunit O, mitochondrial from Pisum sativum (Garden pea).